The primary structure comprises 434 residues: Glutamate-1-semialdehyde 2,1-aminomutase (434 aa).

Lys-265 carries the post-translational modification N6-(pyridoxal phosphate)lysine.

This sequence belongs to the class-III pyridoxal-phosphate-dependent aminotransferase family. HemL subfamily. Homodimer. It depends on pyridoxal 5'-phosphate as a cofactor.

The protein localises to the cytoplasm. The enzyme catalyses (S)-4-amino-5-oxopentanoate = 5-aminolevulinate. It participates in porphyrin-containing compound metabolism; protoporphyrin-IX biosynthesis; 5-aminolevulinate from L-glutamyl-tRNA(Glu): step 2/2. The protein is Glutamate-1-semialdehyde 2,1-aminomutase of Ruminiclostridium cellulolyticum (strain ATCC 35319 / DSM 5812 / JCM 6584 / H10) (Clostridium cellulolyticum).